Here is a 683-residue protein sequence, read N- to C-terminus: Transforming growth factor-beta-induced protein ig-h3 (683 aa).

Positions 1–23 are cleaved as a signal peptide; that stretch reads MALLGRLLPLALALALGPAATHA. Phosphoserine is present on Ser-37. Positions 45-99 constitute an EMI domain; sequence GPNVCAVQKLIGTNKKYFTNCKQWYQRKICGKSTVISYECCPGYEKVPGEKGCPA. Intrachain disulfides connect Cys-49/Cys-85, Cys-74/Cys-339, Cys-84/Cys-97, Cys-214/Cys-317, and Cys-473/Cys-478. At Cys-65 the chain carries S-cysteinyl cysteine. 4 consecutive FAS1 domains span residues 103-236, 240-371, 375-498, and 502-632; these read LSNL…DKVI, TNNI…DELL, SAKT…DRML, and MGTV…NTVL. The Cell attachment site motif lies at 642–644; that stretch reads RGD.

In terms of assembly, binds to type I, II, and IV collagens. In terms of processing, gamma-carboxyglutamated; gamma-carboxyglutamate residues are formed by vitamin K dependent carboxylation; these residues may be required for binding to calcium. According to a report, does not contain any vitamin K-dependent gamma-carboxyglutamate residues. Post-translationally, the EMI domain contains 2 expected intradomain disulfide bridges (Cys-49-Cys85 and Cys-84-Cys-97) and one unusual interdomain disulfide bridge to the second FAS1 domain (Cys-74-Cys-339). This arrangement violates the predicted disulfide bridge pattern of an EMI domain. As to expression, widely distributed in various tissues except for the brain. High levels in corneal epithelium.

Its subcellular location is the secreted. The protein localises to the extracellular space. The protein resides in the extracellular matrix. Functionally, plays a role in cell adhesion. May play a role in cell-collagen interactions. The chain is Transforming growth factor-beta-induced protein ig-h3 (TGFBI) from Sus scrofa (Pig).